The primary structure comprises 379 residues: Chaperone protein DnaJ (379 aa).

Residues 5 to 70 (DYYEVLGVSR…QKRAAYDQYG (66 aa)) enclose the J domain. A CR-type zinc finger spans residues 134–212 (GVTKEIRIPT…CHGHGRVEKS (79 aa)). Positions 147, 150, 164, 167, 186, 189, 200, and 203 each coordinate Zn(2+). CXXCXGXG motif repeat units lie at residues 147–154 (CDVCHGSG), 164–171 (CPTCHGAG), 186–193 (CPHCHGRG), and 200–207 (CNKCHGHG).

The protein belongs to the DnaJ family. Homodimer. Zn(2+) serves as cofactor.

It localises to the cytoplasm. Participates actively in the response to hyperosmotic and heat shock by preventing the aggregation of stress-denatured proteins and by disaggregating proteins, also in an autonomous, DnaK-independent fashion. Unfolded proteins bind initially to DnaJ; upon interaction with the DnaJ-bound protein, DnaK hydrolyzes its bound ATP, resulting in the formation of a stable complex. GrpE releases ADP from DnaK; ATP binding to DnaK triggers the release of the substrate protein, thus completing the reaction cycle. Several rounds of ATP-dependent interactions between DnaJ, DnaK and GrpE are required for fully efficient folding. Also involved, together with DnaK and GrpE, in the DNA replication of plasmids through activation of initiation proteins. The protein is Chaperone protein DnaJ of Yersinia pseudotuberculosis serotype O:1b (strain IP 31758).